The chain runs to 97 residues: uncharacterized protein (97 aa).

Residues 1–21 form the signal peptide; sequence MNKKFSISLLSTILAFLLVLG. The N-palmitoyl cysteine moiety is linked to residue Cys22. Cys22 carries the S-diacylglycerol cysteine lipid modification.

To B.burgdorferi BBD15.

The protein resides in the cell membrane. This is an uncharacterized protein from Borreliella burgdorferi (strain ATCC 35210 / DSM 4680 / CIP 102532 / B31) (Borrelia burgdorferi).